Reading from the N-terminus, the 286-residue chain is Undecaprenyl-diphosphatase (286 aa).

7 consecutive transmembrane segments (helical) span residues 50-70 (PGVS…IAYF), 97-117 (LGIA…AIKL), 127-147 (LRSV…LALA), 165-185 (GLLV…RSGS), 200-220 (AARF…LVEL), 230-250 (GGVL…WLAI), and 262-282 (TWVF…WWAG).

This sequence belongs to the UppP family.

The protein resides in the cell inner membrane. It catalyses the reaction di-trans,octa-cis-undecaprenyl diphosphate + H2O = di-trans,octa-cis-undecaprenyl phosphate + phosphate + H(+). In terms of biological role, catalyzes the dephosphorylation of undecaprenyl diphosphate (UPP). Confers resistance to bacitracin. The chain is Undecaprenyl-diphosphatase from Synechococcus sp. (strain WH7803).